Here is a 919-residue protein sequence, read N- to C-terminus: TRPM8 channel-associated factor 2 (919 aa).

The region spanning 542-841 is the Peptidase M60 domain; that stretch reads DCWVSTGLYL…TYLQLQEAFG (300 aa).

The protein belongs to the TCAF family. In terms of assembly, isoform 2 interacts with TRPM8 (via N-terminus and C-terminus domains); the interaction inhibits TRPM8 channel activity. Interacts with TRPV6. Isoform 2 is expressed in the prostate and in cancerous prostate samples.

It localises to the cell membrane. Functionally, negatively regulates the plasma membrane cation channel TRPM8 activity. Involved in the recruitment of TRPM8 to the cell surface. Promotes prostate cancer cell migration stimulation in a TRPM8-dependent manner. In Homo sapiens (Human), this protein is TRPM8 channel-associated factor 2.